The following is a 270-amino-acid chain: NAD kinase (270 aa).

Catalysis depends on Asp-45, which acts as the Proton acceptor. NAD(+) is bound by residues 45 to 46 (DG), 121 to 122 (NE), Arg-147, Asp-149, 160 to 165 (TAYSKS), and Ala-184.

The protein belongs to the NAD kinase family. A divalent metal cation serves as cofactor.

The protein resides in the cytoplasm. The enzyme catalyses NAD(+) + ATP = ADP + NADP(+) + H(+). Functionally, involved in the regulation of the intracellular balance of NAD and NADP, and is a key enzyme in the biosynthesis of NADP. Catalyzes specifically the phosphorylation on 2'-hydroxyl of the adenosine moiety of NAD to yield NADP. This Lactobacillus helveticus (strain DPC 4571) protein is NAD kinase.